The following is a 286-amino-acid chain: Penicillin-insensitive murein endopeptidase (286 aa).

The N-terminal stretch at 1 to 22 is a signal peptide; sequence MNKILLKTTIIFTALFSLNVVA. Positions 117, 120, 127, 152, and 218 each coordinate Zn(2+).

It belongs to the peptidase M74 family. Requires Zn(2+) as cofactor.

It localises to the periplasm. In terms of biological role, murein endopeptidase that cleaves the D-alanyl-meso-2,6-diamino-pimelyl amide bond that connects peptidoglycan strands. Likely plays a role in the removal of murein from the sacculus. The chain is Penicillin-insensitive murein endopeptidase (mepA) from Haemophilus influenzae (strain ATCC 51907 / DSM 11121 / KW20 / Rd).